The following is a 202-amino-acid chain: Transcription factor MUTE (202 aa).

The region spanning 1-49 is the bHLH domain; the sequence is MSHIAVERNRRRQMNEHLKSLRSLTPCFYIKRGDQASIIGGVIEFIKEL.

In terms of assembly, homodimer. In terms of tissue distribution, leaf epidermis and flowers.

The protein resides in the nucleus. In terms of biological role, transcription factor. Together with FMA and SPCH, regulates the stomata formation. Required for the differentiation of stomatal guard cells, by promoting successive asymmetric cell divisions and the formation of guard mother cells. Promotes the conversion of the leaf epidermis into stomata. This Arabidopsis thaliana (Mouse-ear cress) protein is Transcription factor MUTE (MUTE).